Here is a 454-residue protein sequence, read N- to C-terminus: uncharacterized protein (454 aa).

The tract at residues 1–25 (MHGPTSKAISRNVRSVKRPRRAPRP) is disordered. Residues 14–23 (RSVKRPRRAP) are compositionally biased toward basic residues.

The protein resides in the cytoplasm. The protein localises to the nucleus. This is an uncharacterized protein from Saccharomyces cerevisiae (strain ATCC 204508 / S288c) (Baker's yeast).